The sequence spans 340 residues: N-acetyl-gamma-glutamyl-phosphate reductase (340 aa).

Cys-149 is an active-site residue.

The protein belongs to the NAGSA dehydrogenase family. Type 1 subfamily.

Its subcellular location is the cytoplasm. It catalyses the reaction N-acetyl-L-glutamate 5-semialdehyde + phosphate + NADP(+) = N-acetyl-L-glutamyl 5-phosphate + NADPH + H(+). It functions in the pathway amino-acid biosynthesis; L-arginine biosynthesis; N(2)-acetyl-L-ornithine from L-glutamate: step 3/4. Its function is as follows. Catalyzes the NADPH-dependent reduction of N-acetyl-5-glutamyl phosphate to yield N-acetyl-L-glutamate 5-semialdehyde. The protein is N-acetyl-gamma-glutamyl-phosphate reductase of Vesicomyosocius okutanii subsp. Calyptogena okutanii (strain HA).